A 671-amino-acid polypeptide reads, in one-letter code: Autophagy-related protein 22-2 (671 aa).

Composition is skewed to polar residues over residues 1–10 and 19–34; these read MVPRNFSESQ and PSNS…SSSF. The interval 1-67 is disordered; sequence MVPRNFSESQ…RDVPAQYAGE (67 aa). N-linked (GlcNAc...) asparagine glycosylation is found at Asn5 and Asn21. The span at 39–60 shows a compositional bias: basic and acidic residues; it reads ERSSSADHDSMGPDIGSAHRDV. Transmembrane regions (helical) follow at residues 83 to 103, 155 to 175, 188 to 208, and 212 to 232; these read YGFA…PITL, SFAM…VVSI, LLLF…TVVP, and LLGA…FVLL. Residues 251–271 form a disordered region; it reads PDFSPEFRPSSVDESPPEHSL. Residues 324–344 traverse the membrane as a helical segment; sequence IGIGYSAGLFLQCVSIVIIWL. The N-linked (GlcNAc...) asparagine glycan is linked to Asn346. 7 helical membrane passes run 354–374, 422–442, 457–477, 491–511, 523–543, 560–582, and 591–611; these read LVLF…ALWL, FFLA…GTAV, GLIN…WAAI, ACIC…LPIV, WEMY…SSYC, YALY…GAIV, and AFWF…FVNV. The tract at residues 634–671 is disordered; that stretch reads ESAGEGSRGSSIDHESGQNEGLIYPRVGENAGRGRNDI.

The protein belongs to the ATG22 family.

The protein localises to the vacuole membrane. Vacuolar effluxer which mediate the efflux of amino acids resulting from autophagic degradation. The release of autophagic amino acids allows the maintenance of protein synthesis and viability during nitrogen starvation. The sequence is that of Autophagy-related protein 22-2 (atg22-2) from Sclerotinia sclerotiorum (strain ATCC 18683 / 1980 / Ss-1) (White mold).